A 417-amino-acid polypeptide reads, in one-letter code: Inactive GDSL esterase/lipase-like protein 25 (417 aa).

Residues 1-50 form the signal peptide; the sequence is MLLIPSFTANSNEPPPSKLSLSDLSMAILKSHFFLLFPLLLLHFHTVSFA. N-linked (GlcNAc...) asparagine glycosylation is found at Asn160, Asn308, and Asn311. His331 is a catalytic residue.

Belongs to the 'GDSL' lipolytic enzyme family. Interacts with the PYK10 complex and TGG2, but not with TGG1 or PEN2. In terms of tissue distribution, expressed throughout the seedling, rosette leaves, roots, inflorescence and imbibed seed, but not in pollen.

It is found in the vacuole. It localises to the endoplasmic reticulum. Functionally, involved in organization of the endomembrane system and is required for endoplasmic reticulum morphology and organelle distribution. May act by inhibiting the formation of PYK10 complex by binding to GLL23 and exporting it from the ER. Required for proper subcellular localization of myrosinase TGG2. Has no lipase or esterase activity. This is Inactive GDSL esterase/lipase-like protein 25 (MVP1) from Arabidopsis thaliana (Mouse-ear cress).